A 213-amino-acid chain; its full sequence is Coiled-coil domain-containing protein 43 (213 aa).

A coiled-coil region spans residues 119 to 206; the sequence is RKEAVLAQYA…ERKDKEKKRT (88 aa). The disordered stretch occupies residues 127–213; the sequence is YANVTDDEDE…KRTQKGERKR (87 aa). Residues 131–142 show a composition bias toward acidic residues; the sequence is TDDEDEAEEEEQ. Basic and acidic residues predominate over residues 169 to 200; that stretch reads QRDQAKEDAQKKKEQDKMQREKDKLSKQERKD. Residues 201–213 are compositionally biased toward basic residues; it reads KEKKRTQKGERKR.

It belongs to the CCDC43 family.

This is Coiled-coil domain-containing protein 43 (ccdc43) from Danio rerio (Zebrafish).